The following is a 187-amino-acid chain: Ribosome maturation factor RimM (187 aa).

The PRC barrel domain occupies 94-168 (DDEFYHADLV…RVIVDMPDGL (75 aa)). Positions 167–187 (GLIGGDKPDTSDTAPLGQDFD) are disordered.

Belongs to the RimM family. As to quaternary structure, binds ribosomal protein uS19.

It is found in the cytoplasm. Functionally, an accessory protein needed during the final step in the assembly of 30S ribosomal subunit, possibly for assembly of the head region. Essential for efficient processing of 16S rRNA. May be needed both before and after RbfA during the maturation of 16S rRNA. It has affinity for free ribosomal 30S subunits but not for 70S ribosomes. This is Ribosome maturation factor RimM from Jannaschia sp. (strain CCS1).